Reading from the N-terminus, the 947-residue chain is Altered inheritance of mitochondria protein 3 (947 aa).

Disordered stretches follow at residues 1–334 (MGFW…LLPQ), 354–810 (MSST…QDEV), and 824–904 (RKTN…KSLE). The segment covering 36–54 (ASKKHYNNSKARRERKSGK) has biased composition (basic residues). 3 positions are modified to phosphoserine: Ser57, Ser58, and Ser64. The span at 59-69 (DEEYDSEDEME) shows a compositional bias: acidic residues. Over residues 70–84 (YERKPTDIRSLKDPK) the composition is skewed to basic and acidic residues. Composition is skewed to low complexity over residues 93-105 (PGQK…QQQQ) and 130-163 (QSQY…GVVP). Over residues 177–255 (GSNSNATSYQ…YVSHGSTNLG (79 aa)) the composition is skewed to polar residues. Low complexity-rich tracts occupy residues 256-289 (QSQF…QQGQ) and 313-334 (QQQQ…LLPQ). Residues 354-367 (MSSTTNMQDSNPSY) are compositionally biased toward polar residues. Positions 379–395 (GGQPPVPVRMQPQPPQP) are enriched in pro residues. Residues 466–475 (IQPNTTSSAA) are compositionally biased toward polar residues. Ser476 carries the phosphoserine modification. Over residues 488–502 (DNERNSGNKENDEST) the composition is skewed to basic and acidic residues. The segment covering 633–644 (VPQSKPQSQSQF) has biased composition (polar residues). Over residues 667–676 (SQSSNSSDSS) the composition is skewed to low complexity. Thr729 bears the Phosphothreonine mark. Basic and acidic residues predominate over residues 749–759 (DSSKDANKYEK). Over residues 763–774 (PVTSSIQAQQST) the composition is skewed to polar residues. Residue Thr861 is modified to Phosphothreonine. Residues 862-879 (PPRPPPSRSSPKKVPPVV) are compositionally biased toward pro residues. A compositionally biased stretch (basic residues) spans 888–899 (KKPPVVPKKKPL).

It belongs to the AIM3 family. Interacts with RVS167.

It localises to the membrane raft. This is Altered inheritance of mitochondria protein 3 (AIM3) from Saccharomyces cerevisiae (strain ATCC 204508 / S288c) (Baker's yeast).